Reading from the N-terminus, the 1158-residue chain is ATP-dependent helicase/deoxyribonuclease subunit B (1158 aa).

8-15 serves as a coordination point for ATP; it reads GRAGTGKS. [4Fe-4S] cluster is bound by residues Cys791, Cys1112, Cys1115, and Cys1121.

It belongs to the helicase family. AddB/RexB type 1 subfamily. As to quaternary structure, heterodimer of AddA and AddB. Mg(2+) is required as a cofactor. Requires [4Fe-4S] cluster as cofactor.

Its function is as follows. The heterodimer acts as both an ATP-dependent DNA helicase and an ATP-dependent, dual-direction single-stranded exonuclease. Recognizes the chi site generating a DNA molecule suitable for the initiation of homologous recombination. The AddB subunit has 5' -&gt; 3' nuclease activity but not helicase activity. The sequence is that of ATP-dependent helicase/deoxyribonuclease subunit B from Clostridium perfringens (strain 13 / Type A).